Here is a 272-residue protein sequence, read N- to C-terminus: 3-methyl-2-oxobutanoate hydroxymethyltransferase (272 aa).

D42 and D86 together coordinate Mg(2+). 3-methyl-2-oxobutanoate is bound by residues 42 to 43 (DS), D86, and K116. E118 lines the Mg(2+) pocket. E185 functions as the Proton acceptor in the catalytic mechanism.

The protein belongs to the PanB family. As to quaternary structure, homodecamer; pentamer of dimers. Requires Mg(2+) as cofactor.

The protein localises to the cytoplasm. The enzyme catalyses 3-methyl-2-oxobutanoate + (6R)-5,10-methylene-5,6,7,8-tetrahydrofolate + H2O = 2-dehydropantoate + (6S)-5,6,7,8-tetrahydrofolate. Its pathway is cofactor biosynthesis; (R)-pantothenate biosynthesis; (R)-pantoate from 3-methyl-2-oxobutanoate: step 1/2. Its function is as follows. Catalyzes the reversible reaction in which hydroxymethyl group from 5,10-methylenetetrahydrofolate is transferred onto alpha-ketoisovalerate to form ketopantoate. In Prochlorococcus marinus (strain MIT 9303), this protein is 3-methyl-2-oxobutanoate hydroxymethyltransferase.